A 2241-amino-acid chain; its full sequence is Little elongation complex subunit 1 (2241 aa).

Residues 22–185 (CASLQQNLNE…KQKNEKELRH (164 aa)) adopt a coiled-coil conformation. 2 stretches are compositionally biased toward basic and acidic residues: residues 222–233 (GEGGRRIPEKPA) and 296–315 (AFCE…DGNR). Disordered regions lie at residues 222-255 (GEGG…GGPA), 273-315 (GDFS…DGNR), and 368-387 (GEFT…SMES). S523 is subject to Phosphoserine. Residues 552–590 (EFSKRTLTDGSASKSPCVTGSGRFQRRERDVRESTPQSG) form a disordered region. A compositionally biased stretch (polar residues) spans 559–569 (TDGSASKSPCV). S676 carries the phosphoserine modification. Residues 703–817 (TAKGHSLPQS…PSGESTIPPE (115 aa)) are disordered. Positions 718–728 (TGGGQCKGRGP) are enriched in gly residues. Over residues 738 to 760 (DWTSLARSQAGFTRRSSGSADST) the composition is skewed to polar residues. T803 is modified (phosphothreonine). S896 bears the Phosphoserine mark. The disordered stretch occupies residues 971 to 1119 (SGVTSGVFPA…VGEAGHPSDV (149 aa)). The span at 1065–1074 (EEDTEVEDEA) shows a compositional bias: acidic residues. Residues 1091–1104 (RQQEQAEDSHRPLG) show a composition bias toward basic and acidic residues. K1189 is subject to N6-acetyllysine. 3 disordered regions span residues 1231–1328 (SDVL…CLSI), 1419–1475 (ASSQ…KSRL), and 1543–1671 (VHLN…AAAS). Positions 1252-1266 (DTEHALLESTHHSQA) are enriched in basic and acidic residues. The span at 1460–1470 (DISSNGQSANF) shows a compositional bias: polar residues. Phosphoserine is present on residues S1553 and S1582. The segment covering 1574–1585 (DRSTPTNCSPDT) has biased composition (polar residues). Pro residues predominate over residues 1595 to 1606 (PPLPPLLPPLIA). T1607 carries the post-translational modification Phosphothreonine. A phosphoserine mark is found at S1657, S1662, S1664, S1666, and S1677. 2 disordered regions span residues 1777 to 1800 (GSSG…AGGK) and 1812 to 1843 (KRLR…GSPL). The segment covering 1781 to 1794 (ADGSQGKSQDSGVQ) has biased composition (polar residues). Positions 1814-1829 (LRLDNKSPEPDTREVT) are enriched in basic and acidic residues. Position 1820 is a phosphoserine (S1820).

It belongs to the ICE1 family. In terms of assembly, component of the little elongation complex (LEC), at least composed of ELL (ELL, ELL2 or ELL3), ZC3H8, ICE1 and ICE2. Interacts (via N-terminus domain) with ELL. Interacts (via C-terminus domain) with ICE2 and ZC3H8.

Its subcellular location is the nucleus. It localises to the cajal body. In terms of biological role, component of the little elongation complex (LEC), a complex required to regulate small nuclear RNA (snRNA) gene transcription by RNA polymerase II and III. Specifically acts as a scaffold protein that promotes the LEC complex formation and recruitment and RNA polymerase II occupancy at snRNA genes in subnuclear bodies. In Mus musculus (Mouse), this protein is Little elongation complex subunit 1 (Ice1).